The sequence spans 1088 residues: RNA-directed RNA polymerase (1088 aa).

Positions 501–687 (LSYGDVTRFL…AKRYIAGGKI (187 aa)) constitute a RdRp catalytic domain.

It belongs to the reoviridae RNA-directed RNA polymerase family. As to quaternary structure, interacts with VP3 (Potential). Interacts with VP2; this interaction activates VP1. Interacts with NSP5; this interaction is probably necessary for the formation of functional virus factories. Interacts with NSP2; this interaction is weak. Requires Mg(2+) as cofactor.

It localises to the virion. It carries out the reaction RNA(n) + a ribonucleoside 5'-triphosphate = RNA(n+1) + diphosphate. RNA-directed RNA polymerase that is involved in both transcription and genome replication. Together with VP3 capping enzyme, forms an enzyme complex positioned near the channels situated at each of the five-fold vertices of the core. Following infection, the outermost layer of the virus is lost, leaving a double-layered particle (DLP) made up of the core and VP6 shell. VP1 then catalyzes the transcription of fully conservative plus-strand genomic RNAs that are extruded through the DLP's channels into the cytoplasm where they function as mRNAs for translation of viral proteins. One copy of each of the viral (+)RNAs is also recruited during core assembly, together with newly synthesized polymerase complexes and VP2. The polymerase of these novo-formed particles catalyzes the synthesis of complementary minus-strands leading to dsRNA formation. To do so, the polymerase specifically recognizes and binds 4 bases 5'-UGUG-3' in the conserved 3'-sequence of plus-strand RNA templates. VP2 presumably activates the autoinhibited VP1-RNA complex to coordinate packaging and genome replication. Once dsRNA synthesis is complete, the polymerase switches to the transcriptional mode, thus providing secondary transcription. The protein is RNA-directed RNA polymerase of Chlorocebus pygerythrus (Vervet monkey).